Reading from the N-terminus, the 67-residue chain is DNA-directed RNA polymerases I, II, and III subunit RPABC5 (67 aa).

The Zn(2+) site is built by Cys-7, Cys-10, Cys-44, and Cys-45.

Belongs to the archaeal Rpo10/eukaryotic RPB10 RNA polymerase subunit family. As to quaternary structure, component of the RNA polymerase I (Pol I), RNA polymerase II (Pol II) and RNA polymerase III (Pol III) complexes consisting of at least 13, 12 and 17 subunits, respectively. Pol I complex consists of a ten-subunit catalytic core composed of POLR1A/RPA1, POLR1B/RPA2, POLR1C/RPAC1, POLR1D/RPAC2, POLR1H/RPA12, POLR2E/RPABC1, POLR2F/RPABC2, POLR2H/RPABC3, POLR2K/RPABC4 and POLR2L/RPABC5; a mobile stalk subunit POLR1F/RPA43 protruding from the core and additional subunits homologous to general transcription factors POLR1E/RPA49 and POLR1G/RPA34. Part of Pol I pre-initiation complex (PIC), in which Pol I core assembles with RRN3 and promoter-bound UTBF and SL1/TIF-IB complex. Pol II complex contains a ten-subunit catalytic core composed of POLR2A/RPB1, POLR2B/RPB2, POLR2C/RPB3, POLR2I/RPB9, POLR2J/RPB11, POLR2E/RPABC1, POLR2F/RPABC2, POLR2H/RPABC3, POLR2K/RPABC4 and POLR2L/RPABC5 and a mobile stalk composed of two subunits POLR2D/RPB4 and POLR2G/RPB7. Part of Pol II(G) complex, in which Pol II core associates with an additional subunit POLR2M; unlike conventional Pol II, Pol II(G) functions as a transcriptional repressor. Part of TBP-based Pol II pre-initiation complex (PIC), in which Pol II core assembles with general transcription factors and other specific initiation factors including GTF2E1, GTF2E2, GTF2F1, GTF2F2, TCEA1, ERCC2, ERCC3, GTF2H2, GTF2H3, GTF2H4, GTF2H5, GTF2A1, GTF2A2, GTF2B and TBP; this large multi-subunit PIC complex mediates DNA unwinding and targets Pol II core to the transcription start site where the first phosphodiester bond forms. Pol III complex consists of a ten-subunit catalytic core composed of POLR3A/RPC1, POLR3B/RPC2, POLR1C/RPAC1, POLR1D/RPAC2, POLR3K/RPC10, POLR2E/RPABC1, POLR2F/RPABC2, POLR2H/RPABC3, POLR2K/RPABC4 and POLR2L/RPABC5; a mobile stalk composed of two subunits POLR3H/RPC8 and CRCP/RPC9, protruding from the core and functioning primarily in transcription initiation; and additional subunits homologous to general transcription factors of the RNA polymerase II machinery, POLR3C/RPC3-POLR3F/RPC6-POLR3G/RPC7 heterotrimer required for transcription initiation and POLR3D/RPC4-POLR3E/RPC5 heterodimer involved in both transcription initiation and termination.

Its subcellular location is the nucleus. The protein resides in the nucleolus. Functionally, DNA-dependent RNA polymerase catalyzes the transcription of DNA into RNA using the four ribonucleoside triphosphates as substrates. Common component of RNA polymerases I, II and III which synthesize ribosomal RNA precursors, mRNA precursors and many functional non-coding RNAs, and a small RNAs, such as 5S rRNA and tRNAs, respectively. The chain is DNA-directed RNA polymerases I, II, and III subunit RPABC5 (POLR2L) from Bos taurus (Bovine).